A 244-amino-acid chain; its full sequence is 5-oxoprolinase subunit A (244 aa).

Belongs to the LamB/PxpA family. Forms a complex composed of PxpA, PxpB and PxpC.

The catalysed reaction is 5-oxo-L-proline + ATP + 2 H2O = L-glutamate + ADP + phosphate + H(+). Catalyzes the cleavage of 5-oxoproline to form L-glutamate coupled to the hydrolysis of ATP to ADP and inorganic phosphate. This chain is 5-oxoprolinase subunit A, found in Salmonella agona (strain SL483).